A 1022-amino-acid chain; its full sequence is Antigenic heat-stable 120 kDa protein (1022 aa).

Disordered regions lie at residues 1 to 41 (MSKD…QTTT) and 355 to 403 (GQSK…PQSQ). Over residues 19-34 (EYTEEQKQTLEQEQKE) the composition is skewed to basic and acidic residues. Composition is skewed to polar residues over residues 355–380 (GQSKEQPLITPQQTTSSSVEPPQYKQ) and 387–403 (PTNQPLQPETSQMPQSQ).

The protein resides in the cytoplasm. The sequence is that of Antigenic heat-stable 120 kDa protein (sca4) from Rickettsia conorii (strain ATCC VR-613 / Malish 7).